Here is a 158-residue protein sequence, read N- to C-terminus: Transcription factor BTF3 homolog 4 (158 aa).

Lys-5 carries the N6-methyllysine modification. The 66-residue stretch at Thr-33–Leu-98 folds into the NAC-A/B domain. Thr-111 carries the post-translational modification Phosphothreonine. The tract at residues Arg-122–Asn-158 is disordered. Over residues Asp-134–Asp-150 the composition is skewed to acidic residues.

Belongs to the NAC-beta family.

The sequence is that of Transcription factor BTF3 homolog 4 (BTF3L4) from Homo sapiens (Human).